The following is a 113-amino-acid chain: Hydrogenase maturation factor HypA (113 aa).

H2 contributes to the Ni(2+) binding site. Positions 73, 76, 89, and 92 each coordinate Zn(2+).

Belongs to the HypA/HybF family.

Involved in the maturation of [NiFe] hydrogenases. Required for nickel insertion into the metal center of the hydrogenase. In Cereibacter sphaeroides (Rhodobacter sphaeroides), this protein is Hydrogenase maturation factor HypA.